The chain runs to 445 residues: tRNA(Ile)-lysidine synthase (445 aa).

An ATP-binding site is contributed by 19–24 (SGGIDS).

This sequence belongs to the tRNA(Ile)-lysidine synthase family.

Its subcellular location is the cytoplasm. The enzyme catalyses cytidine(34) in tRNA(Ile2) + L-lysine + ATP = lysidine(34) in tRNA(Ile2) + AMP + diphosphate + H(+). Functionally, ligates lysine onto the cytidine present at position 34 of the AUA codon-specific tRNA(Ile) that contains the anticodon CAU, in an ATP-dependent manner. Cytidine is converted to lysidine, thus changing the amino acid specificity of the tRNA from methionine to isoleucine. The protein is tRNA(Ile)-lysidine synthase of Buchnera aphidicola subsp. Schizaphis graminum (strain Sg).